The sequence spans 140 residues: Sperm protein associated with the nucleus on the X chromosome N3 (140 aa).

Composition is skewed to polar residues over residues 1–20 (MEQPTSSTNGEKTKSPCKSN), 62–79 (INSNQLENDQSQENSINP), and 131–140 (EGSSQDSGED). Residues 1–140 (MEQPTSSTNG…EGSSQDSGED (140 aa)) form a disordered region.

The protein belongs to the SPAN-X family.

The protein is Sperm protein associated with the nucleus on the X chromosome N3 (SPANXN3) of Pan troglodytes (Chimpanzee).